The primary structure comprises 417 residues: MSSKYPRSVRRCLPLWALTLEAALILLFYFFTHYDASLEDQKGLVASYQVGQDLTVMAAIGLGFLTSSFRRHSWSSVAFNLFMLALGVQWAILLDGFLSQFPSGKVVITLFSIRLATMSALSVLISVDAVLGKVNLAQLVVMVLVEVTALGNLRMVISNIFNTDYHMNMMHIYVFAAYFGLSVAWCLPKPLPEGTEDKDQTATIPSLSAMLGALFLWMFWPSFNSALLRSPIERKNAVFNTYYAVAVSVVTAISGSSLAHPQGKISKTYVHSAVLAGGVAVGTSCHLIPSPWLAMVLGLVAGLISVGGAKYLPGCCNRVLGIPHSSIMGYNFSLLGLLGEIIYIVLLVLDTVGAGNGMIGFQVLLSIGELSLAIVIALMSGLLTGLLLNLKIWKAPHEAKYFDDQVFWKFPHLAVGF.

Transmembrane regions (helical) follow at residues 12 to 32 (CLPL…YFFT), 44 to 64 (LVAS…GLGF), 77 to 97 (VAFN…LDGF), 107 to 127 (VITL…LISV), 130 to 150 (VLGK…VTAL), 167 to 187 (MNMM…AWCL), 203 to 223 (TIPS…WPSF), 238 to 258 (VFNT…GSSL), 287 to 307 (LIPS…ISVG), 334 to 354 (LLGL…TVGA), and 358 to 378 (MIGF…VIAL).

This sequence belongs to the ammonium transporter (TC 2.A.49) family. Rh subfamily. Post-translationally, palmitoylated. As to expression, restricted to tissues or cell lines expressing erythroid characters.

The protein localises to the cell membrane. Functionally, may be part of an oligomeric complex which is likely to have a transport or channel function in the erythrocyte membrane. The sequence is that of Blood group Rh(D) polypeptide (RHD) from Homo sapiens (Human).